Consider the following 335-residue polypeptide: Phosphatidate cytidylyltransferase, mitochondrial (335 aa).

It belongs to the TAM41 family. Mg(2+) is required as a cofactor.

It is found in the mitochondrion inner membrane. The catalysed reaction is a 1,2-diacyl-sn-glycero-3-phosphate + CTP + H(+) = a CDP-1,2-diacyl-sn-glycerol + diphosphate. The protein operates within phospholipid metabolism; CDP-diacylglycerol biosynthesis; CDP-diacylglycerol from sn-glycerol 3-phosphate: step 3/3. Catalyzes the conversion of phosphatidic acid (PA) to CDP-diacylglycerol (CDP-DAG), an essential intermediate in the synthesis of phosphatidylglycerol, cardiolipin and phosphatidylinositol. The sequence is that of Phosphatidate cytidylyltransferase, mitochondrial (TAMM41) from Bos taurus (Bovine).